The chain runs to 193 residues: NAD(P)H-quinone oxidoreductase subunit I (193 aa).

2 4Fe-4S ferredoxin-type domains span residues 56–85 and 96–125; these read GRIH…VDWE and KHYS…MTEE. The [4Fe-4S] cluster site is built by C65, C68, C71, C75, C105, C108, C111, and C115. The disordered stretch occupies residues 174-193; the sequence is NLPKGSQRAGQHPEDLVKAE. Residues 184–193 show a composition bias toward basic and acidic residues; it reads QHPEDLVKAE.

It belongs to the complex I 23 kDa subunit family. In terms of assembly, NDH-1 is composed of at least 11 different subunits. It depends on [4Fe-4S] cluster as a cofactor.

The protein localises to the cellular thylakoid membrane. The catalysed reaction is a plastoquinone + NADH + (n+1) H(+)(in) = a plastoquinol + NAD(+) + n H(+)(out). It carries out the reaction a plastoquinone + NADPH + (n+1) H(+)(in) = a plastoquinol + NADP(+) + n H(+)(out). Its function is as follows. NDH-1 shuttles electrons from an unknown electron donor, via FMN and iron-sulfur (Fe-S) centers, to quinones in the respiratory and/or the photosynthetic chain. The immediate electron acceptor for the enzyme in this species is believed to be plastoquinone. Couples the redox reaction to proton translocation, and thus conserves the redox energy in a proton gradient. The chain is NAD(P)H-quinone oxidoreductase subunit I from Synechocystis sp. (strain ATCC 27184 / PCC 6803 / Kazusa).